Consider the following 193-residue polypeptide: Probable thymidylate kinase (193 aa).

ATP is bound at residue 7-14 (GIDGAGKT).

This sequence belongs to the thymidylate kinase family.

It catalyses the reaction dTMP + ATP = dTDP + ADP. The polypeptide is Probable thymidylate kinase (tmk) (Thermoplasma acidophilum (strain ATCC 25905 / DSM 1728 / JCM 9062 / NBRC 15155 / AMRC-C165)).